Consider the following 185-residue polypeptide: Cuticle protein 18.6, isoform A (185 aa).

A run of 7 repeats spans residues 21 to 24, 33 to 36, 41 to 44, 54 to 57, 133 to 136, 139 to 142, and 150 to 153. The Chitin-binding type R&amp;R domain occupies 64–134; sequence HPQYSFAYNV…KEAGAHPAAA (71 aa).

Functionally, component of the cuticle of migratory locust which contains more than 100 different structural proteins. In Locusta migratoria (Migratory locust), this protein is Cuticle protein 18.6, isoform A.